The sequence spans 364 residues: DNA replication and repair protein RecF (364 aa).

30–37 (GNNAQGKT) provides a ligand contact to ATP.

The protein belongs to the RecF family.

Its subcellular location is the cytoplasm. Functionally, the RecF protein is involved in DNA metabolism; it is required for DNA replication and normal SOS inducibility. RecF binds preferentially to single-stranded, linear DNA. It also seems to bind ATP. This is DNA replication and repair protein RecF from Clostridium botulinum (strain Loch Maree / Type A3).